The chain runs to 277 residues: ATP synthase subunit a (277 aa).

5 consecutive transmembrane segments (helical) span residues 40–60 (AWHV…LIIF), 98–118 (SALI…MNLM), 154–174 (DLNL…FYSI), 219–239 (LFGN…IGYF), and 245–265 (FMWA…FMML).

Belongs to the ATPase A chain family. F-type ATPases have 2 components, CF(1) - the catalytic core - and CF(0) - the membrane proton channel. CF(1) has five subunits: alpha(3), beta(3), gamma(1), delta(1), epsilon(1). CF(0) has three main subunits: a(1), b(2) and c(9-12). The alpha and beta chains form an alternating ring which encloses part of the gamma chain. CF(1) is attached to CF(0) by a central stalk formed by the gamma and epsilon chains, while a peripheral stalk is formed by the delta and b chains.

It is found in the cell inner membrane. In terms of biological role, key component of the proton channel; it plays a direct role in the translocation of protons across the membrane. The polypeptide is ATP synthase subunit a (Alteromonas mediterranea (strain DSM 17117 / CIP 110805 / LMG 28347 / Deep ecotype)).